The following is a 791-amino-acid chain: Centrosomal protein of 89 kDa (791 aa).

A disordered region spans residues 27 to 203; that stretch reads APKPAVPRTP…HTQQKDVKHS (177 aa). Over residues 30–45 the composition is skewed to pro residues; sequence PAVPRTPPPRSPNPSP. Phosphoserine is present on serine 50. The segment covering 50 to 62 has biased composition (low complexity); the sequence is SALAAAILATTLT. Residues 75 to 89 are compositionally biased toward basic and acidic residues; the sequence is SRSESDASDIEKDSF. Positions 94–107 are enriched in polar residues; the sequence is ATTSELRLRQSWQN. A compositionally biased stretch (basic and acidic residues) spans 137-161; that stretch reads RESESTWKDVGDGRDATYTVPHRDQ. Positions 181–190 are enriched in low complexity; it reads SDSSSSSSSS. Coiled coils occupy residues 252–291, 370–598, and 670–737; these read SANQ…TEKA, LLAY…MGKE, and HRLK…SLLQ.

The protein resides in the cytoplasm. The protein localises to the cytosol. It is found in the cytoskeleton. It localises to the microtubule organizing center. Its subcellular location is the centrosome. The protein resides in the spindle pole. The protein localises to the centriole. It is found in the mitochondrion intermembrane space. In terms of biological role, required for ciliogenesis. Also plays a role in mitochondrial metabolism where it may modulate complex IV activity. This chain is Centrosomal protein of 89 kDa (Cep89), found in Mus musculus (Mouse).